The sequence spans 1392 residues: Protein dispatched homolog 3 (1392 aa).

At 1–73 (MDTEDDPLLQ…LGWAFTNPCC (73 aa)) the chain is on the cytoplasmic side. The segment at 16-40 (EEQEEEEATGETFLGAQKPGPQPGA) is disordered. The chain crosses the membrane as a helical span at residues 74 to 94 (AGLVLFLGCSIPMALSAFMFL). The Lumenal segment spans residues 95–462 (YYPPLDIDIS…YEVRRTFNND (368 aa)). Residues 162–248 (GNRSRQASRA…HAAVAANQSR (87 aa)) form a disordered region. Asparagine 163 is a glycosylation site (N-linked (GlcNAc...) asparagine). Over residues 190–199 (SAAQKPTANR) the composition is skewed to polar residues. Residues 457–615 (RTFNNDMLLA…LVTMPAALGL (159 aa)) enclose the SSD domain. The helical transmembrane segment at 463-483 (MLLAFISSSCIAALVYILTSC) threads the bilayer. Serine 484 is a topological domain (cytoplasmic). A helical membrane pass occupies residues 485 to 505 (VFLSFFGIASIGLSCLVALFL). Residues 506 to 508 (YHV) are Lumenal-facing. The chain crosses the membrane as a helical span at residues 509-529 (VFGIQYLGILNGVAAFVIVGI). Residues 530–573 (GVDDVFVFINTYRQATHLEDPQLRMIHTVQTAGKATFFTSLTTA) are Cytoplasmic-facing. The chain crosses the membrane as a helical span at residues 574 to 594 (AAYAANVFSQIPAVHDFGLFM). Residue serine 595 is a topological domain, lumenal. The chain crosses the membrane as a helical span at residues 596–616 (LIVSCCWLAVLVTMPAALGLW). Topologically, residues 617–729 (SLYLAPLESS…WVLWSAVKSR (113 aa)) are cytoplasmic. A helical transmembrane segment spans residues 730–750 (WVIVGLFVSILILSLVFASRL). The Lumenal portion of the chain corresponds to 751–1182 (RPASRAPLLF…IFMEIVGVQS (432 aa)). An N-linked (GlcNAc...) asparagine glycan is attached at asparagine 1021. A helical transmembrane segment spans residues 1183 to 1203 (ALCGLVLSLLICVAAVAVFTT). Position 1204 (histidine 1204) is a topological domain, cytoplasmic. The chain crosses the membrane as a helical span at residues 1205-1225 (ILLLLPVLLSILGIVCLVVTI). Topologically, residues 1226-1291 (MYWSGWEMGA…TLEAVRHVGV (66 aa)) are lumenal. A helical transmembrane segment spans residues 1292–1312 (AIVSSALTTVIATVPLFFCII). Topologically, residues 1313-1320 (APFAKFGK) are cytoplasmic. The helical transmembrane segment at 1321–1341 (IVALNTGVSILYTLTVSTALL) threads the bilayer. Over 1342–1358 (GIMAPSSFTRTRTSFLK) the chain is Lumenal. Residues 1359–1379 (ALGAVLLAGALGLGACLVLLQ) form a helical membrane-spanning segment. At 1380 to 1392 (SGYKIPLPAGASL) the chain is on the cytoplasmic side.

Belongs to the patched family. In terms of tissue distribution, expressed in brain and testis.

The protein localises to the endoplasmic reticulum membrane. Its subcellular location is the nucleus membrane. It localises to the cytoplasmic vesicle membrane. Plays a role in neuronal proliferation and differentiation. Plays a role in the accumulation of cellular cholesterol. Involved in intracellular lipid droplet formation. May contribute to cholesterol homeostasis in neuronal cells. The protein is Protein dispatched homolog 3 of Homo sapiens (Human).